Here is a 65-residue protein sequence, read N- to C-terminus: Toxin Cbi1 (65 aa).

Positions 1–64 constitute an LCN-type CS-alpha/beta domain; the sequence is KDGYPMDNKG…VWDRATNKCR (64 aa). Cystine bridges form between cysteine 11/cysteine 63, cysteine 15/cysteine 37, cysteine 22/cysteine 44, and cysteine 26/cysteine 46.

It belongs to the long (4 C-C) scorpion toxin superfamily. Sodium channel inhibitor family. Beta subfamily. Expressed by the venom gland.

The protein localises to the secreted. Functionally, beta toxins bind voltage-independently at site-4 of sodium channels (Nav) and shift the voltage of activation toward more negative potentials thereby affecting sodium channel activation and promoting spontaneous and repetitive firing. The sequence is that of Toxin Cbi1 from Centruroides bicolor (Scorpion).